The following is a 150-amino-acid chain: Arginine repressor (150 aa).

This sequence belongs to the ArgR family.

The protein resides in the cytoplasm. Its pathway is amino-acid biosynthesis; L-arginine biosynthesis [regulation]. Its function is as follows. Regulates arginine biosynthesis genes. The sequence is that of Arginine repressor from Ruminiclostridium cellulolyticum (strain ATCC 35319 / DSM 5812 / JCM 6584 / H10) (Clostridium cellulolyticum).